A 155-amino-acid polypeptide reads, in one-letter code: uncharacterized protein (155 aa).

Residues Met-1–Leu-17 constitute a mitochondrion transit peptide. A disordered region spans residues Trp-111–Arg-155. Basic residues predominate over residues Arg-113–Val-124. Basic and acidic residues predominate over residues Ala-125–Arg-155.

This sequence belongs to the prokaryotic/mitochondrial release factor family.

It localises to the mitochondrion. This is an uncharacterized protein from Saccharomyces cerevisiae (strain ATCC 204508 / S288c) (Baker's yeast).